We begin with the raw amino-acid sequence, 346 residues long: 3-isopropylmalate dehydrogenase (346 aa).

Position 76–87 (Gly76–Glu87) interacts with NAD(+). Residues Arg94, Arg104, Arg132, and Asp217 each coordinate substrate. Asp217, Asp241, and Asp245 together coordinate Mg(2+). Gly275 to Asn287 contacts NAD(+).

The protein belongs to the isocitrate and isopropylmalate dehydrogenases family. LeuB type 1 subfamily. Homodimer. The cofactor is Mg(2+). Requires Mn(2+) as cofactor.

It localises to the cytoplasm. It catalyses the reaction (2R,3S)-3-isopropylmalate + NAD(+) = 4-methyl-2-oxopentanoate + CO2 + NADH. The protein operates within amino-acid biosynthesis; L-leucine biosynthesis; L-leucine from 3-methyl-2-oxobutanoate: step 3/4. Its function is as follows. Catalyzes the oxidation of 3-carboxy-2-hydroxy-4-methylpentanoate (3-isopropylmalate) to 3-carboxy-4-methyl-2-oxopentanoate. The product decarboxylates to 4-methyl-2 oxopentanoate. The sequence is that of 3-isopropylmalate dehydrogenase from Staphylococcus saprophyticus subsp. saprophyticus (strain ATCC 15305 / DSM 20229 / NCIMB 8711 / NCTC 7292 / S-41).